The following is a 68-amino-acid chain: Beta-defensin 1 (68 aa).

The N-terminal stretch at 1 to 21 (MRTSYLLLFTLCLLLSEMASG) is a signal peptide. Residues 22–32 (GNFLTGLGHRS) constitute a propeptide that is removed on maturation. Intrachain disulfides connect C37/C66, C44/C59, and C49/C67.

Belongs to the beta-defensin family. In terms of assembly, monomer. Homodimer.

It localises to the secreted. The protein localises to the membrane. Has bactericidal activity. May act as a ligand for C-C chemokine receptor CCR6. Positively regulates the sperm motility and bactericidal activity in a CCR6-dependent manner. Binds to CCR6 and triggers Ca2+ mobilization in the sperm which is important for its motility. This chain is Beta-defensin 1 (DEFB1), found in Pan troglodytes (Chimpanzee).